A 461-amino-acid polypeptide reads, in one-letter code: ATP synthase subunit beta (461 aa).

151-158 (GGAGVGKT) lines the ATP pocket.

This sequence belongs to the ATPase alpha/beta chains family. In terms of assembly, F-type ATPases have 2 components, CF(1) - the catalytic core - and CF(0) - the membrane proton channel. CF(1) has five subunits: alpha(3), beta(3), gamma(1), delta(1), epsilon(1). CF(0) has three main subunits: a(1), b(2) and c(9-12). The alpha and beta chains form an alternating ring which encloses part of the gamma chain. CF(1) is attached to CF(0) by a central stalk formed by the gamma and epsilon chains, while a peripheral stalk is formed by the delta and b chains.

It is found in the cell inner membrane. The catalysed reaction is ATP + H2O + 4 H(+)(in) = ADP + phosphate + 5 H(+)(out). Its function is as follows. Produces ATP from ADP in the presence of a proton gradient across the membrane. The catalytic sites are hosted primarily by the beta subunits. The polypeptide is ATP synthase subunit beta (Idiomarina loihiensis (strain ATCC BAA-735 / DSM 15497 / L2-TR)).